The following is a 344-amino-acid chain: tRNA N6-adenosine threonylcarbamoyltransferase (344 aa).

Fe cation-binding residues include His112 and His116. Residues 134-138, Asp167, Gly180, and Asn280 each bind substrate; that span reads LASGG. A Fe cation-binding site is contributed by Asp308.

This sequence belongs to the KAE1 / TsaD family. It depends on Fe(2+) as a cofactor.

The protein resides in the cytoplasm. The enzyme catalyses L-threonylcarbamoyladenylate + adenosine(37) in tRNA = N(6)-L-threonylcarbamoyladenosine(37) in tRNA + AMP + H(+). Its function is as follows. Required for the formation of a threonylcarbamoyl group on adenosine at position 37 (t(6)A37) in tRNAs that read codons beginning with adenine. Is involved in the transfer of the threonylcarbamoyl moiety of threonylcarbamoyl-AMP (TC-AMP) to the N6 group of A37, together with TsaE and TsaB. TsaD likely plays a direct catalytic role in this reaction. This is tRNA N6-adenosine threonylcarbamoyltransferase from Rickettsia rickettsii (strain Iowa).